The following is a 375-amino-acid chain: Methylthioribose-1-phosphate isomerase (375 aa).

Substrate is bound by residues 53–55 (RGA), arginine 90, and glutamine 202. The active-site Proton donor is the aspartate 243. Position 253–254 (253–254 (NK)) interacts with substrate.

The protein belongs to the eIF-2B alpha/beta/delta subunits family. MtnA subfamily.

It carries out the reaction 5-(methylsulfanyl)-alpha-D-ribose 1-phosphate = 5-(methylsulfanyl)-D-ribulose 1-phosphate. It participates in amino-acid biosynthesis; L-methionine biosynthesis via salvage pathway; L-methionine from S-methyl-5-thio-alpha-D-ribose 1-phosphate: step 1/6. Catalyzes the interconversion of methylthioribose-1-phosphate (MTR-1-P) into methylthioribulose-1-phosphate (MTRu-1-P). The polypeptide is Methylthioribose-1-phosphate isomerase (Rhodospirillum centenum (strain ATCC 51521 / SW)).